A 357-amino-acid chain; its full sequence is Holliday junction branch migration complex subunit RuvB (357 aa).

Residues 1–20 form a disordered region; sequence MDDHDDSPVSPSFLKSDGEI. The interval 1–185 is large ATPase domain (RuvB-L); sequence MDDHDDSPVS…FGFTGHMDFY (185 aa). ATP contacts are provided by residues L24, R25, G66, K69, T70, S71, 132–134, R175, Y185, and R222; that span reads EDF. T70 is a Mg(2+) binding site. A small ATPAse domain (RuvB-S) region spans residues 186 to 256; the sequence is EPGELLRILE…VARAALEVYD (71 aa). The segment at 259–357 is head domain (RuvB-H); the sequence is TLGLDRLDRA…TSQPTLDLFD (99 aa). 2 residues coordinate DNA: R314 and R319.

Belongs to the RuvB family. In terms of assembly, homohexamer. Forms an RuvA(8)-RuvB(12)-Holliday junction (HJ) complex. HJ DNA is sandwiched between 2 RuvA tetramers; dsDNA enters through RuvA and exits via RuvB. An RuvB hexamer assembles on each DNA strand where it exits the tetramer. Each RuvB hexamer is contacted by two RuvA subunits (via domain III) on 2 adjacent RuvB subunits; this complex drives branch migration. In the full resolvosome a probable DNA-RuvA(4)-RuvB(12)-RuvC(2) complex forms which resolves the HJ.

It is found in the cytoplasm. It carries out the reaction ATP + H2O = ADP + phosphate + H(+). In terms of biological role, the RuvA-RuvB-RuvC complex processes Holliday junction (HJ) DNA during genetic recombination and DNA repair, while the RuvA-RuvB complex plays an important role in the rescue of blocked DNA replication forks via replication fork reversal (RFR). RuvA specifically binds to HJ cruciform DNA, conferring on it an open structure. The RuvB hexamer acts as an ATP-dependent pump, pulling dsDNA into and through the RuvAB complex. RuvB forms 2 homohexamers on either side of HJ DNA bound by 1 or 2 RuvA tetramers; 4 subunits per hexamer contact DNA at a time. Coordinated motions by a converter formed by DNA-disengaged RuvB subunits stimulates ATP hydrolysis and nucleotide exchange. Immobilization of the converter enables RuvB to convert the ATP-contained energy into a lever motion, pulling 2 nucleotides of DNA out of the RuvA tetramer per ATP hydrolyzed, thus driving DNA branch migration. The RuvB motors rotate together with the DNA substrate, which together with the progressing nucleotide cycle form the mechanistic basis for DNA recombination by continuous HJ branch migration. Branch migration allows RuvC to scan DNA until it finds its consensus sequence, where it cleaves and resolves cruciform DNA. The polypeptide is Holliday junction branch migration complex subunit RuvB (Nocardia farcinica (strain IFM 10152)).